The following is a 421-amino-acid chain: Testin (421 aa).

The 108-residue stretch at 92–199 folds into the PET domain; it reads MILTNPVAAK…GDVKLPCEMD (108 aa). The disordered stretch occupies residues 133–164; it reads EKQPVAGSEGAQYRKKQLAKQLPAHDQDPSKC. Basic and acidic residues predominate over residues 155–164; that stretch reads PAHDQDPSKC. LIM zinc-binding domains are found at residues 234-297, 299-359, and 362-421; these read YSCY…CDSE, PRCA…NHAV, and QGCH…KRMS.

This sequence belongs to the prickle / espinas / testin family. As to quaternary structure, interacts via LIM domain 1 with ZYX. Interacts (via LIM domain 3) with ENAH and VASP. Interacts with ALKBH4, talin, actin, alpha-actinin, GRIP1 and PXN. Interacts (via LIM domain 2) with ACTL7A (via N-terminus). Heterodimer with ACTL7A; the heterodimer interacts with ENAH to form a heterotrimer.

The protein localises to the cytoplasm. Its subcellular location is the cell junction. The protein resides in the focal adhesion. Functionally, scaffold protein that may play a role in cell adhesion, cell spreading and in the reorganization of the actin cytoskeleton. Plays a role in the regulation of cell proliferation. May act as a tumor suppressor. This Pan troglodytes (Chimpanzee) protein is Testin (TES).